The chain runs to 198 residues: Peptide methionine sulfoxide reductase MsrA 2 (198 aa).

The active site involves cysteine 32.

Belongs to the MsrA Met sulfoxide reductase family.

It catalyses the reaction L-methionyl-[protein] + [thioredoxin]-disulfide + H2O = L-methionyl-(S)-S-oxide-[protein] + [thioredoxin]-dithiol. The enzyme catalyses [thioredoxin]-disulfide + L-methionine + H2O = L-methionine (S)-S-oxide + [thioredoxin]-dithiol. In terms of biological role, has an important function as a repair enzyme for proteins that have been inactivated by oxidation. Catalyzes the reversible oxidation-reduction of methionine sulfoxide in proteins to methionine. This Rhizobium meliloti (strain 1021) (Ensifer meliloti) protein is Peptide methionine sulfoxide reductase MsrA 2 (msrA2).